Reading from the N-terminus, the 87-residue chain is MAKATSSLVVPIIFLVIFALVEQNTGCFDYDVYQPCDHCRERCLKYYPVTRKAICRKNHCVCIGPCPNDKAIPNVKLFKNVKEQILS.

The N-terminal stretch at 1–23 (MAKATSSLVVPIIFLVIFALVEQ) is a signal peptide. Cystine bridges form between cysteine 27–cysteine 66, cysteine 36–cysteine 55, cysteine 39–cysteine 60, and cysteine 43–cysteine 62.

Belongs to the DEFL family.

It localises to the secreted. The sequence is that of Defensin-like protein 175 from Arabidopsis thaliana (Mouse-ear cress).